Here is a 540-residue protein sequence, read N- to C-terminus: Chaperonin GroEL (540 aa).

ATP is bound by residues 30–33 (TLGP), Lys51, 87–91 (DGTTT), Gly415, and Asp495.

The protein belongs to the chaperonin (HSP60) family. Forms a cylinder of 14 subunits composed of two heptameric rings stacked back-to-back. Interacts with the co-chaperonin GroES.

Its subcellular location is the cytoplasm. It catalyses the reaction ATP + H2O + a folded polypeptide = ADP + phosphate + an unfolded polypeptide.. Together with its co-chaperonin GroES, plays an essential role in assisting protein folding. The GroEL-GroES system forms a nano-cage that allows encapsulation of the non-native substrate proteins and provides a physical environment optimized to promote and accelerate protein folding. The sequence is that of Chaperonin GroEL from Serratia ficaria.